The chain runs to 155 residues: Small ribosomal subunit protein uS7 (155 aa).

The protein belongs to the universal ribosomal protein uS7 family. In terms of assembly, part of the 30S ribosomal subunit. Contacts proteins S9 and S11.

In terms of biological role, one of the primary rRNA binding proteins, it binds directly to 16S rRNA where it nucleates assembly of the head domain of the 30S subunit. Is located at the subunit interface close to the decoding center, probably blocks exit of the E-site tRNA. This is Small ribosomal subunit protein uS7 from Helicobacter pylori (strain Shi470).